The chain runs to 435 residues: MPSETITPLLAHRARTNIQWFTHKHMRQVSRLNAKQHRVNMMTAENWSIRDELVDQYKTLFAQHLSPRHLSYADGMGGDAELLQAAADFFNRVFAAHSRVQPAHLVVGAGCSSLLENLLYDICEPGEGVLIETPFWGGFETSFVLRSNVTAVHVRPPCHGNGSADLDRLVSAYIEAYERALRQAPCRIKAILVCNPHNPCGHIYPPRVIQALLQFAQRHDLFYISDEIYALSTLDEQTAFTSVLSIDVAALGVDLARVFTLYSISKDLGSSGLRLGFGITQAHPDLRLSLAISNHSRVSTFTSLVITALLHDPEAATAILHQNRAALQRSAKLISDFLAFHQIPFVPPAAGVYVWARLGWRSSSRPGDEPSWDEEARLNDRFEAAGVSVGAGQGYCASEPGWFRITFAIPREELVAGLRRIEQVVGMEGQKWTAI.

Lys266 bears the N6-(pyridoxal phosphate)lysine mark.

The protein belongs to the class-I pyridoxal-phosphate-dependent aminotransferase family. Pyridoxal 5'-phosphate is required as a cofactor.

It functions in the pathway mycotoxin biosynthesis. Probable aminotransferase; part of the gene cluster that mediates the biosynthesis of gliotoxin, a member of the epipolythiodioxopiperazine (ETP) class of toxins characterized by a disulfide bridged cyclic dipeptide. The first step in gliotoxin biosynthesis is the condensation of serine and phenylalanine to form the cyclo-L-phenylalanyl-L-serine diketopiperazine (DKP) by the NRPS gliP. GliP is also able to produce the DKP cyclo-L-tryptophanyl-L-serine, suggesting that the substrate specificity of the first adenylation (A) domain in gliP is sufficiently relaxed to accommodate both L-Phe and L-Trp. The cytochrome P450 monooxygenase gliC has been shown to catalyze the subsequent hydroxylation of the alpha-carbon of L-Phe in cyclo-L-phenylalanyl-L-serine whereas the second cytochrome P450 enzyme, gliF, is presumably involved in the modification of the DKP side chain. The glutathione S-transferase (GST) gliG then forms a bis-glutathionylated biosynthetic intermediate which is responsible for the sulfurization of gliotoxin. This bis-glutathionylated intermediate is subsequently processed by the gamma-glutamyl cyclotransferase gliK to remove both gamma-glutamyl moieties. Subsequent processing via gliI yields a biosynthetic intermediate, which is N-methylated via the N-methyltransferase gliN, before the gliotoxin oxidoreductase gliT-mediated disulfide bridge closure. GliN-mediated amide methylation confers stability to ETP, damping the spontaneous formation of tri- and tetrasulfides. Intracellular dithiol gliotoxin oxidized by gliT is subsequently effluxed by gliA. Gliotoxin contributes to pathogenesis during invasive aspergillosis. In macrophages and neutrophils, gliotoxin showed inhibition of various different cell functions including cytokine production, antigen presentation, phagocytosis, and production of reactive oxygen species. This chain is Probable aminotransferase gliI, found in Aspergillus fumigatus (strain ATCC MYA-4609 / CBS 101355 / FGSC A1100 / Af293) (Neosartorya fumigata).